The primary structure comprises 357 residues: Peptide chain release factor 1 (357 aa).

Q234 carries the N5-methylglutamine modification. The interval 283–313 is disordered; the sequence is SKKQEQRSSNRKQQVGSGDRSERIRTYNFPQ.

Belongs to the prokaryotic/mitochondrial release factor family. Post-translationally, methylated by PrmC. Methylation increases the termination efficiency of RF1.

The protein localises to the cytoplasm. Functionally, peptide chain release factor 1 directs the termination of translation in response to the peptide chain termination codons UAG and UAA. This is Peptide chain release factor 1 from Borrelia garinii subsp. bavariensis (strain ATCC BAA-2496 / DSM 23469 / PBi) (Borreliella bavariensis).